The primary structure comprises 287 residues: Phosphatidylserine decarboxylase proenzyme (287 aa).

Active-site charge relay system; for autoendoproteolytic cleavage activity residues include D90, H147, and S252. The active-site Schiff-base intermediate with substrate; via pyruvic acid; for decarboxylase activity is S252. A Pyruvic acid (Ser); by autocatalysis modification is found at S252.

It belongs to the phosphatidylserine decarboxylase family. PSD-B subfamily. Prokaryotic type I sub-subfamily. Heterodimer of a large membrane-associated beta subunit and a small pyruvoyl-containing alpha subunit. The cofactor is pyruvate. Is synthesized initially as an inactive proenzyme. Formation of the active enzyme involves a self-maturation process in which the active site pyruvoyl group is generated from an internal serine residue via an autocatalytic post-translational modification. Two non-identical subunits are generated from the proenzyme in this reaction, and the pyruvate is formed at the N-terminus of the alpha chain, which is derived from the carboxyl end of the proenzyme. The autoendoproteolytic cleavage occurs by a canonical serine protease mechanism, in which the side chain hydroxyl group of the serine supplies its oxygen atom to form the C-terminus of the beta chain, while the remainder of the serine residue undergoes an oxidative deamination to produce ammonia and the pyruvoyl prosthetic group on the alpha chain. During this reaction, the Ser that is part of the protease active site of the proenzyme becomes the pyruvoyl prosthetic group, which constitutes an essential element of the active site of the mature decarboxylase.

Its subcellular location is the cell membrane. The catalysed reaction is a 1,2-diacyl-sn-glycero-3-phospho-L-serine + H(+) = a 1,2-diacyl-sn-glycero-3-phosphoethanolamine + CO2. It functions in the pathway phospholipid metabolism; phosphatidylethanolamine biosynthesis; phosphatidylethanolamine from CDP-diacylglycerol: step 2/2. In terms of biological role, catalyzes the formation of phosphatidylethanolamine (PtdEtn) from phosphatidylserine (PtdSer). The protein is Phosphatidylserine decarboxylase proenzyme of Pseudomonas putida (strain GB-1).